Reading from the N-terminus, the 240-residue chain is 2,3,4,5-tetrahydropyridine-2,6-dicarboxylate N-acetyltransferase (240 aa).

It belongs to the transferase hexapeptide repeat family. DapH subfamily.

It catalyses the reaction (S)-2,3,4,5-tetrahydrodipicolinate + acetyl-CoA + H2O = L-2-acetamido-6-oxoheptanedioate + CoA. The protein operates within amino-acid biosynthesis; L-lysine biosynthesis via DAP pathway; LL-2,6-diaminopimelate from (S)-tetrahydrodipicolinate (acetylase route): step 1/3. In terms of biological role, catalyzes the transfer of an acetyl group from acetyl-CoA to tetrahydrodipicolinate. The sequence is that of 2,3,4,5-tetrahydropyridine-2,6-dicarboxylate N-acetyltransferase from Bacillus cereus (strain AH187).